The sequence spans 206 residues: Large ribosomal subunit protein uL4 (206 aa).

Positions 47 to 77 (TRAQKGRSDVTGSTRKQWRQKGTGRARTGAA) are disordered.

The protein belongs to the universal ribosomal protein uL4 family. Part of the 50S ribosomal subunit.

One of the primary rRNA binding proteins, this protein initially binds near the 5'-end of the 23S rRNA. It is important during the early stages of 50S assembly. It makes multiple contacts with different domains of the 23S rRNA in the assembled 50S subunit and ribosome. Its function is as follows. Forms part of the polypeptide exit tunnel. This Nitrosomonas europaea (strain ATCC 19718 / CIP 103999 / KCTC 2705 / NBRC 14298) protein is Large ribosomal subunit protein uL4.